Here is a 249-residue protein sequence, read N- to C-terminus: Ubiquinone biosynthesis O-methyltransferase (249 aa).

Positions 41, 72, 93, and 136 each coordinate S-adenosyl-L-methionine.

It belongs to the methyltransferase superfamily. UbiG/COQ3 family.

It carries out the reaction a 3-demethylubiquinol + S-adenosyl-L-methionine = a ubiquinol + S-adenosyl-L-homocysteine + H(+). It catalyses the reaction a 3-(all-trans-polyprenyl)benzene-1,2-diol + S-adenosyl-L-methionine = a 2-methoxy-6-(all-trans-polyprenyl)phenol + S-adenosyl-L-homocysteine + H(+). The protein operates within cofactor biosynthesis; ubiquinone biosynthesis. O-methyltransferase that catalyzes the 2 O-methylation steps in the ubiquinone biosynthetic pathway. This chain is Ubiquinone biosynthesis O-methyltransferase, found in Methylobacterium nodulans (strain LMG 21967 / CNCM I-2342 / ORS 2060).